The sequence spans 207 residues: Protein lin-7 homolog B (207 aa).

The short motif at 1–13 (MAALVEPLGLERD) is the Kinase interacting site element. In terms of domain architecture, L27 spans 10–65 (LERDVSRAVELLERLQRSGELPPQKLQALQRVLQSRFCSAIREVYEQLYDTLDITG). Residues 93–175 (VVELPKTDEG…SVKLVVRYTP (83 aa)) enclose the PDZ domain. Residues 187–207 (KMRSARRRQQHQSYSSLESRG) are disordered. The span at 197-207 (HQSYSSLESRG) shows a compositional bias: polar residues.

Belongs to the lin-7 family. Forms a complex with CASK and CASKIN1. Component of the brain-specific heterotrimeric complex (LIN-10-LIN-2-LIN-7 complex) composed of at least APBA1, CASK, and LIN7, which associates with the motor protein KIF17 to transport vesicles along microtubules. Forms a heterotrimeric complex composed of MMP5, LIN7B and PATJ; the N-terminal L27 domain of PALS1 interacts with the L27 domain of PATJ and the C-terminal L27 domain of PALS1 interacts with the L27 domain of LIN7B. Forms a heterotrimeric complex with DLG1 and CASK via their L27 domains. Interacts with DLG4 and GRIN2B as well as CDH1 and CTNNB1, the channels KCNJ12/Kir2.2, KCNJ4/Kir2.3 and probably KCNJ2/Kir2.1 and SLC6A12/BGT-1 via its PDZ domain. The association of LIN7A with cadherin and beta-catenin is calcium-dependent, occurs at synaptic junctions and requires the actin cytoskeleton. Interacts with EGFR, ERBB2, ERBB3 and ERBB4 with both PDZ and KID domains. Associates with KIF17 via APBA1. Interacts with ASIC3. Interacts with TOPK. Interacts with RTKN. Interacts with APBA1. Interacts with MPP7. Interacts with DLG2. Interacts with DLG3.

It is found in the cell membrane. It localises to the basolateral cell membrane. The protein resides in the cell junction. Its subcellular location is the postsynaptic density membrane. The protein localises to the tight junction. Its function is as follows. Plays a role in establishing and maintaining the asymmetric distribution of channels and receptors at the plasma membrane of polarized cells. Forms membrane-associated multiprotein complexes that may regulate delivery and recycling of proteins to the correct membrane domains. The tripartite complex composed of LIN7 (LIN7A, LIN7B or LIN7C), CASK and APBA1 associates with the motor protein KIF17 to transport vesicles containing N-methyl-D-aspartate (NMDA) receptor subunit NR2B along microtubules. This complex may have the potential to couple synaptic vesicle exocytosis to cell adhesion in brain. Ensures the proper localization of GRIN2B (subunit 2B of the NMDA receptor) to neuronal postsynaptic density and may function in localizing synaptic vesicles at synapses where it is recruited by beta-catenin and cadherin. Required to localize Kir2 channels, GABA transporter (SLC6A12) and EGFR/ERBB1, ERBB2, ERBB3 and ERBB4 to the basolateral membrane of epithelial cells. May increase the amplitude of ASIC3 acid-evoked currents by stabilizing the channel at the cell surface. The sequence is that of Protein lin-7 homolog B (LIN7B) from Homo sapiens (Human).